The following is a 359-amino-acid chain: Peptide chain release factor 1 (359 aa).

Q236 is subject to N5-methylglutamine.

The protein belongs to the prokaryotic/mitochondrial release factor family. Post-translationally, methylated by PrmC. Methylation increases the termination efficiency of RF1.

The protein localises to the cytoplasm. Peptide chain release factor 1 directs the termination of translation in response to the peptide chain termination codons UAG and UAA. In Malacoplasma penetrans (strain HF-2) (Mycoplasma penetrans), this protein is Peptide chain release factor 1.